Consider the following 376-residue polypeptide: UPF0284 protein glr4139 (376 aa).

It belongs to the UPF0284 family.

This Gloeobacter violaceus (strain ATCC 29082 / PCC 7421) protein is UPF0284 protein glr4139.